A 162-amino-acid chain; its full sequence is uncharacterized protein (162 aa).

The first 19 residues, 1 to 19 (MARVYILFFSVFFVFPLFS), serve as a signal peptide directing secretion. 2 helical membrane passes run 53 to 75 (LSIGAFPIVTLLSFITYDIIRLI) and 105 to 127 (IVFGVAVGISVTIGLIDVTYRAV).

The protein resides in the cell membrane. This is an uncharacterized protein from Treponema pallidum (strain Nichols).